The primary structure comprises 161 residues: RNA pyrophosphohydrolase (161 aa).

A Nudix hydrolase domain is found at 7–149; sequence KYRPCVGIML…KKEVYKTVIE (143 aa). Residues 40–61 carry the Nudix box motif; the sequence is GGIDDGEKLEQAALRELLEEVG.

The protein belongs to the Nudix hydrolase family. RppH subfamily. It depends on a divalent metal cation as a cofactor.

In terms of biological role, accelerates the degradation of transcripts by removing pyrophosphate from the 5'-end of triphosphorylated RNA, leading to a more labile monophosphorylated state that can stimulate subsequent ribonuclease cleavage. This chain is RNA pyrophosphohydrolase, found in Wolbachia sp. subsp. Brugia malayi (strain TRS).